The chain runs to 524 residues: MDITIRQAVLRNFLGNSPDWYKLAIIAFLIINPLVFFFVSPFVAGWMLVIEFIFTLAMALKCYPLQPGGLLAIQAVAIGMTSPHQVAEEIANNLEVLLLLIFMVAGIYFMKQLLLFIFTKLLLSIRSKITLSLAFCVASAFLSAFLDALTVIAVVISVSVGFYTIYHHVASNHSDKDINDDSWIDSQENRKTLEQFRAFLRSLMMHAGVGTALGGVMTMVGEPQNLIIAKSAGWHFGDFFMRMLPVTLPVLCCGLLVCILLERFKLFGYGAVLPERVRQVLTDYDKQASAKRNRQEKVKLLVQALIGVWLVIALALHLAEVGLVGLSVIILATSFCGITNEHALGKAFQEALPFTALLTVFFAVVAVIIEQSLFTPIIQFVLQSSPSAQLSLFYLFNGLLSSVSDNVFVGTVYINEARKAFELGVISLQQFELLAVAINTGTNLPSVATPNGQAAFLFLLTSALAPLIRLSYGRMVYMALPYTIVMTGVGLLGVEYLLVPVTEWMIQSGWISLPHIAAGVSITH.

13 helical membrane-spanning segments follow: residues L23–V43, G45–L65, L98–F118, C136–I156, L203–P223, F239–I259, A304–V324, G325–G345, L358–I378, L392–V412, A420–T440, A448–I468, and A479–V499.

Belongs to the NhaB Na(+)/H(+) (TC 2.A.34) antiporter family.

It is found in the cell inner membrane. It catalyses the reaction 2 Na(+)(in) + 3 H(+)(out) = 2 Na(+)(out) + 3 H(+)(in). Na(+)/H(+) antiporter that extrudes sodium in exchange for external protons. This Yersinia enterocolitica serotype O:8 / biotype 1B (strain NCTC 13174 / 8081) protein is Na(+)/H(+) antiporter NhaB.